The chain runs to 170 residues: Fibroblast growth factor 2 (170 aa).

The segment at 1–21 is disordered; that stretch reads VGGRGRGRGTAAAARREPGGA. Omega-N-methylarginine; alternate occurs at positions 4, 6, and 8. Residues Arg-4, Arg-6, and Arg-8 each carry the symmetric dimethylarginine; alternate modification. The span at 9–21 shows a compositional bias: low complexity; it reads GTAAAARREPGGA. Asn-51 is a heparin binding site. Tyr-97 carries the phosphotyrosine; by TEC modification. Lys-110 participates in a covalent cross-link: Glycyl lysine isopeptide (Lys-Gly) (interchain with G-Cter in SUMO1). The interval 143 to 159 is heparin-binding; that stretch reads KRTGQYKLGSKTGPGQK.

Belongs to the heparin-binding growth factors family. As to quaternary structure, monomer. Homodimer. Interacts with FGFR1, FGFR2, FGFR3 and FGFR4. Affinity between fibroblast growth factors (FGFs) and their receptors is increased by heparan sulfate glycosaminoglycans that function as coreceptors. Interacts with CSPG4, FGFBP1 and TEC. Found in a complex with FGFBP1, FGF1 and FGF2. Interacts with FGFBP3. Interacts with integrin ITGAV:ITGB3; the interaction is required for FGF2 signaling. Interacts with SNORC (via the extracellular domain). Interacts with glypican GPC3. Post-translationally, the N-terminus of isoform 2 is blocked. Phosphorylation at Tyr-97 regulates FGF2 unconventional secretion.

It localises to the secreted. It is found in the nucleus. Its function is as follows. Acts as a ligand for FGFR1, FGFR2, FGFR3 and FGFR4. Also acts as an integrin ligand which is required for FGF2 signaling. Binds to integrin ITGAV:ITGB3. Plays an important role in the regulation of cell survival, cell division, cell differentiation and cell migration. Functions as a potent mitogen in vitro. Can induce angiogenesis. Mediates phosphorylation of ERK1/2 and thereby promotes retinal lens fiber differentiation. This is Fibroblast growth factor 2 (FGF2) from Cavia porcellus (Guinea pig).